A 269-amino-acid polypeptide reads, in one-letter code: Interleukin-1 beta (269 aa).

Positions 1–116 are cleaved as a propeptide — removed in mature form; by CASP1; that stretch reads MAEVPELASE…TWDNEAYVHD (116 aa). Positions 228-241 match the Involved in interaction with TMED10 C-terminus motif; that stretch reads FESAQFPNWYISTS.

This sequence belongs to the IL-1 family. As to quaternary structure, monomer. In its precursor form, weakly interacts with full-length MEFV; the mature cytokine does not interact at all. Interacts with integrins ITGAV:ITGBV and ITGA5:ITGB1; integrin-binding is required for IL1B signaling. Interacts with cargo receptor TMED10; the interaction is direct and is required for the secretion of IL1B mature form. Interacts with HSP90AB1; the interaction facilitates cargo translocation into the ERGIC. Interacts with HSP90B1; the interaction facilitates cargo translocation into the ERGIC. Post-translationally, activation of the IL1B precursor involves a CASP1-catalyzed proteolytic cleavage. Processing and secretion are temporarily associated. In terms of processing, (Microbial infection) Cleavage by S.pyogenes cysteine protease SpeB promotes its activation independently of CASP1. Expressed in activated monocytes/macrophages (at protein level).

It is found in the cytoplasm. The protein resides in the cytosol. Its subcellular location is the secreted. The protein localises to the lysosome. It localises to the extracellular exosome. With respect to regulation, (Microbial infection) Cleavage by S.pyogenes cysteine protease SpeB promotes its activation independently of CASP1. SpeB-mediated maturation of IL1B plays a dual role depending on infection site: while IL1B inflammatory response prevents bacterial growth during invasive skin infections, it promotes streptococcal infection of the nasopharynx by disrupting colonization resistance mediated by the microbiota. Its function is as follows. Potent pro-inflammatory cytokine. Initially discovered as the major endogenous pyrogen, induces prostaglandin synthesis, neutrophil influx and activation, T-cell activation and cytokine production, B-cell activation and antibody production, and fibroblast proliferation and collagen production. Promotes Th17 differentiation of T-cells. Synergizes with IL12/interleukin-12 to induce IFNG synthesis from T-helper 1 (Th1) cells. Plays a role in angiogenesis by inducing VEGF production synergistically with TNF and IL6. Involved in transduction of inflammation downstream of pyroptosis: its mature form is specifically released in the extracellular milieu by passing through the gasdermin-D (GSDMD) pore. Acts as a sensor of S.pyogenes infection in skin: cleaved and activated by pyogenes SpeB protease, leading to an inflammatory response that prevents bacterial growth during invasive skin infection. This is Interleukin-1 beta from Homo sapiens (Human).